The sequence spans 405 residues: Na(+)-translocating NADH-quinone reductase subunit F (405 aa).

The helical transmembrane segment at 3–23 (IILGIVMFTVIVLVLALMILF) threads the bilayer. The 93-residue stretch at 32–124 (GDITIKVNGE…DMDIEVPEEV (93 aa)) folds into the 2Fe-2S ferredoxin-type domain. [2Fe-2S] cluster contacts are provided by Cys67, Cys73, Cys76, and Cys108. The FAD-binding FR-type domain occupies 127-267 (VKKWECTVIS…SGPFGEFFAK (141 aa)).

It belongs to the NqrF family. As to quaternary structure, composed of six subunits; NqrA, NqrB, NqrC, NqrD, NqrE and NqrF. The cofactor is [2Fe-2S] cluster. It depends on FAD as a cofactor.

It localises to the cell inner membrane. It carries out the reaction a ubiquinone + n Na(+)(in) + NADH + H(+) = a ubiquinol + n Na(+)(out) + NAD(+). In terms of biological role, NQR complex catalyzes the reduction of ubiquinone-1 to ubiquinol by two successive reactions, coupled with the transport of Na(+) ions from the cytoplasm to the periplasm. The first step is catalyzed by NqrF, which accepts electrons from NADH and reduces ubiquinone-1 to ubisemiquinone by a one-electron transfer pathway. In Neisseria meningitidis serogroup C / serotype 2a (strain ATCC 700532 / DSM 15464 / FAM18), this protein is Na(+)-translocating NADH-quinone reductase subunit F.